The primary structure comprises 895 residues: Transcription factor SWI6 (895 aa).

Residues 1–45 are compositionally biased toward polar residues; the sequence is MASTVAGNSFVSQQHPGNLHSANLQSQSQGFRRQNSTSSVPSTAS. The disordered stretch occupies residues 1 to 107; it reads MASTVAGNSF…SDQNVPQQPQ (107 aa). Low complexity predominate over residues 64–100; the sequence is MSSQQSQPPASQQSFSMSQTGSQPQPSQSSFRSYSDQ. Residues 112 to 219 form the HTH APSES-type domain; that stretch reads IYTAVYSNVE…NRNPDGSVSQ (108 aa). A DNA-binding region (H-T-H motif) is located at residues 143 to 164; sequence ATQILKVAGVEKGKRTKILEKE. 2 disordered regions span residues 272 to 293 and 323 to 358; these read ARFDSPGPRGRNGPTRAPSFQR and NMAFSAGSEPQPGGLNGTEPPRKRQRMDMTPANSFG. 2 ANK repeats span residues 458 to 488 and 607 to 636; these read QCHTALHWAATLSRMTILRRLIEAGASPFRV and AGDTALNIAARIGNRSIISQLLEVCASPHI. Residues 653–684 form a disordered region; it reads SDGAMKTKGDSGGDVENGDVGGSSQKSNESSN. Positions 674–684 are enriched in polar residues; sequence GSSQKSNESSN. Residues 698 to 759 adopt a coiled-coil conformation; the sequence is SANFQEEIKN…VTNLQRAEER (62 aa).

The protein resides in the nucleus. Its function is as follows. Transcription factor that plays a role downstream of the MCK1-MKK2-MPS1 cascade. Required for hyphal morphogenesis and pathogenicity. Is an important oxidative stress response regulator and plays a positive role in the regulation of extracellular peroxidases. This Pyricularia oryzae (strain 70-15 / ATCC MYA-4617 / FGSC 8958) (Rice blast fungus) protein is Transcription factor SWI6.